A 108-amino-acid polypeptide reads, in one-letter code: Thiosulfate sulfurtransferase GlpE (108 aa).

A Rhodanese domain is found at 17–105 (QEKEAVLVDI…WQRQFPAEVA (89 aa)). Cys-65 acts as the Cysteine persulfide intermediate in catalysis.

Belongs to the GlpE family.

Its subcellular location is the cytoplasm. The catalysed reaction is thiosulfate + hydrogen cyanide = thiocyanate + sulfite + 2 H(+). The enzyme catalyses thiosulfate + [thioredoxin]-dithiol = [thioredoxin]-disulfide + hydrogen sulfide + sulfite + 2 H(+). Its function is as follows. Transferase that catalyzes the transfer of sulfur from thiosulfate to thiophilic acceptors such as cyanide or dithiols. May function in a CysM-independent thiosulfate assimilation pathway by catalyzing the conversion of thiosulfate to sulfite, which can then be used for L-cysteine biosynthesis. The chain is Thiosulfate sulfurtransferase GlpE from Shigella dysenteriae serotype 1 (strain Sd197).